A 615-amino-acid polypeptide reads, in one-letter code: Afadin- and alpha-actinin-binding protein (615 aa).

2 coiled-coil regions span residues 126–227 (KLGS…IAMD) and 266–293 (RQKQILMENAELKKVLQQMKKEMISLLS). 4 positions are modified to phosphoserine: Ser290, Ser293, Ser313, and Ser319. A disordered region spans residues 293–316 (SPQKKKPRERAEDGTGTVAISDIE). A coiled-coil region spans residues 375–461 (ISRQDHEQET…RSFTEAAIRL (87 aa)). Ser537, Ser541, and Ser543 each carry phosphoserine. The segment at 567-615 (PEESKPSEVARESTDQKWSVQSRPSSREGCYSGCSSAFRSAHGDRDDLP) is disordered. Over residues 568–581 (EESKPSEVARESTD) the composition is skewed to basic and acidic residues.

Belongs to the ADIP family. In terms of assembly, interacts with SSX2 and SSX3. Does not interact with SSX1 and SSX4. Interacts with afadin and alpha-actinin. Interacts with VAV2. Interacts with PCM1. Interacts with WRAP73. Widely expressed.

The protein localises to the cell junction. The protein resides in the adherens junction. It is found in the nucleus. Its subcellular location is the cytoplasm. It localises to the cytoskeleton. The protein localises to the microtubule organizing center. The protein resides in the centrosome. It is found in the centriolar satellite. Its subcellular location is the cilium basal body. Belongs to an adhesion system, which plays a role in the organization of homotypic, interneuronal and heterotypic cell-cell adherens junctions (AJs). May connect the nectin-afadin and E-cadherin-catenin system through alpha-actinin and may be involved in organization of the actin cytoskeleton at AJs through afadin and alpha-actinin. Acts as a centrosome maturation factor, probably by maintaining the integrity of the pericentriolar material and proper microtubule nucleation at mitotic spindle poles. The function seems to implicate at least in part WRAP73; the SSX2IP:WRAP73 complex is proposed to act as regulator of spindle anchoring at the mitotic centrosome. Involved in cell movement: localizes at the leading edge of moving cells in response to PDGF and is required for the formation of the leading edge and the promotion of cell movement, possibly via activation of Rac signaling. Involved in ciliogenesis. It is required for targeted recruitment of the BBSome, CEP290, RAB8, and SSTR3 to the cilia. The polypeptide is Afadin- and alpha-actinin-binding protein (Ssx2ip) (Mus musculus (Mouse)).